Reading from the N-terminus, the 668-residue chain is tRNA 5-methylaminomethyl-2-thiouridine biosynthesis bifunctional protein MnmC (668 aa).

The tRNA (mnm(5)s(2)U34)-methyltransferase stretch occupies residues 1 to 245 (MKHYSIQPAN…KREMLCGVME (245 aa)). The interval 270–668 (IGGGIASALL…LLKGKAVKAG (399 aa)) is FAD-dependent cmnm(5)s(2)U34 oxidoreductase.

The protein in the N-terminal section; belongs to the methyltransferase superfamily. tRNA (mnm(5)s(2)U34)-methyltransferase family. This sequence in the C-terminal section; belongs to the DAO family. It depends on FAD as a cofactor.

The protein resides in the cytoplasm. The catalysed reaction is 5-aminomethyl-2-thiouridine(34) in tRNA + S-adenosyl-L-methionine = 5-methylaminomethyl-2-thiouridine(34) in tRNA + S-adenosyl-L-homocysteine + H(+). Catalyzes the last two steps in the biosynthesis of 5-methylaminomethyl-2-thiouridine (mnm(5)s(2)U) at the wobble position (U34) in tRNA. Catalyzes the FAD-dependent demodification of cmnm(5)s(2)U34 to nm(5)s(2)U34, followed by the transfer of a methyl group from S-adenosyl-L-methionine to nm(5)s(2)U34, to form mnm(5)s(2)U34. The sequence is that of tRNA 5-methylaminomethyl-2-thiouridine biosynthesis bifunctional protein MnmC from Escherichia coli O6:H1 (strain CFT073 / ATCC 700928 / UPEC).